The chain runs to 373 residues: Innexin shaking-B (373 aa).

Residues 1–21 (MLDIFRGLKSLVKISHVNTDS) are Cytoplasmic-facing. The helical transmembrane segment at 22–42 (PVFRLHYSITVIILMSFSLIV) threads the bilayer. Residues 43–106 (TTRQYVGNPI…SAEATAADKK (64 aa)) lie on the Extracellular side of the membrane. Residues 107–127 (IYKYYQWVCFCLFFQAILFYT) traverse the membrane as a helical segment. The Cytoplasmic segment spans residues 128–176 (PRWLWKSWEGGKIHALMMDLDIGICSEIEKKQKKKLLLDYLWDNLRYHN). A helical membrane pass occupies residues 177–199 (WWAYRYYVCEFLSLCNVIGQMFL). The Extracellular portion of the chain corresponds to 200–268 (MNRFFDGEFM…ILPLNVVNEK (69 aa)). A helical transmembrane segment spans residues 269-289 (IYIFLWFWFIILTILTTLTIF). Residues 290–373 (YRIIIIFSPR…PGMKGEIQDA (84 aa)) lie on the Cytoplasmic side of the membrane.

The protein belongs to the pannexin family. As to quaternary structure, monomer.

Its subcellular location is the cell membrane. The protein localises to the cell junction. It localises to the gap junction. Its function is as follows. Structural component of the gap junctions at electrical synapses in distal and mid-depth levels in the lamina. The protein is Innexin shaking-B of Anopheles gambiae (African malaria mosquito).